Consider the following 296-residue polypeptide: MTLNNVTMRQGTVGMQPQQQRWSIPADGRHLMVQKEPHQYSHRNRHSATPEDHCRRSWSSDSTDSVISSESGNTYYRVVLIGEQGVGKSTLANIFAGVHDSMDSDCEVLGEDTYERTLMVDGESATIILLDMWENKGENEWLHDHCMQVGDAYLIVYSITDRASFEKASELRIQLRRARQTEDIPIILVGNKSDLVRCREVSVSEGRTCAVVFDCKFIETSAAVQHNVKELFEGIVRQVRLRRDSKEKNERRLAYQKRKESMPRKARRFWGKIVAKNNKNMAFKLKSKSCHDLSVL.

2 disordered regions span residues 1-20 and 37-68; these read MTLN…PQQQ and PHQY…SVIS. A compositionally biased stretch (low complexity) spans 57–68; the sequence is SWSSDSTDSVIS. Residues 82-89 and 191-194 each bind GTP; these read GEQGVGKS and NKSD. Residues 266-285 are calmodulin-binding; it reads ARRFWGKIVAKNNKNMAFKL.

This sequence belongs to the small GTPase superfamily. RGK family. In terms of assembly, interacts with calmodulin in a Ca(2+)-dependent manner. Binds ROCK1. Phosphorylated on tyrosine residues.

The protein localises to the cell membrane. Its function is as follows. Could be a regulatory protein, possibly participating in receptor-mediated signal transduction at the plasma membrane. Has guanine nucleotide-binding activity but undetectable intrinsic GTPase activity. This chain is GTP-binding protein GEM (GEM), found in Pongo abelii (Sumatran orangutan).